We begin with the raw amino-acid sequence, 688 residues long: Polyphosphate kinase (688 aa).

Residue asparagine 45 coordinates ATP. Residues arginine 375 and arginine 405 each coordinate Mg(2+). One can recognise a PLD phosphodiesterase domain in the interval 430–464; the sequence is PGLKIHAKLFLISRKENGEVVRYAHIGTGNFNEKT. The active-site Phosphohistidine intermediate is the histidine 435. ATP-binding residues include tyrosine 468, arginine 564, and histidine 592.

The protein belongs to the polyphosphate kinase 1 (PPK1) family. Mg(2+) serves as cofactor. In terms of processing, an intermediate of this reaction is the autophosphorylated ppk in which a phosphate is covalently linked to a histidine residue through a N-P bond.

It carries out the reaction [phosphate](n) + ATP = [phosphate](n+1) + ADP. Functionally, catalyzes the reversible transfer of the terminal phosphate of ATP to form a long-chain polyphosphate (polyP). The sequence is that of Polyphosphate kinase from Escherichia coli O6:H1 (strain CFT073 / ATCC 700928 / UPEC).